Consider the following 109-residue polypeptide: Small ribosomal subunit protein uS10 (109 aa).

The protein belongs to the universal ribosomal protein uS10 family. In terms of assembly, part of the 30S ribosomal subunit.

Its function is as follows. Involved in the binding of tRNA to the ribosomes. This chain is Small ribosomal subunit protein uS10, found in Wolbachia pipientis wMel.